A 430-amino-acid polypeptide reads, in one-letter code: Trigger factor (430 aa).

Residues 157-242 (GDLVALETWS…AVEVSEPVLP (86 aa)) enclose the PPIase FKBP-type domain.

This sequence belongs to the FKBP-type PPIase family. Tig subfamily.

The protein localises to the cytoplasm. It carries out the reaction [protein]-peptidylproline (omega=180) = [protein]-peptidylproline (omega=0). Involved in protein export. Acts as a chaperone by maintaining the newly synthesized protein in an open conformation. Functions as a peptidyl-prolyl cis-trans isomerase. This Xanthomonas oryzae pv. oryzae (strain MAFF 311018) protein is Trigger factor.